Reading from the N-terminus, the 627-residue chain is Carene synthase 2, chloroplastic (627 aa).

The N-terminal 36 residues, 1–36 (MSVISIVPLASKSCLYKSLMSSTHELKALCRPIVTL), are a transit peptide targeting the chloroplast. Residues D378, D382, and D530 each contribute to the Mg(2+) site. The DDXXD motif signature appears at 378–382 (DDMYD).

This sequence belongs to the terpene synthase family. Tpsd subfamily. The cofactor is Mg(2+). Requires Mn(2+) as cofactor.

Its subcellular location is the plastid. It is found in the chloroplast. The enzyme catalyses (2E)-geranyl diphosphate = (+)-car-3-ene + diphosphate. It functions in the pathway terpene metabolism; oleoresin biosynthesis. Terpene synthase (TPS) involved in defensive oleoresin formation in conifers in response to insect attack (e.g. white pine weevil P.strobi) or other injury. In Picea sitchensis (Sitka spruce), this protein is Carene synthase 2, chloroplastic (TPS-3car2).